A 234-amino-acid polypeptide reads, in one-letter code: Ubiquitin domain-containing protein 2 (234 aa).

The tract at residues 1–46 is disordered; that stretch reads MGGCVGAQHDSSGSLNENSDGTGVALGRNQPLKKEKPKWKSDYPMT. Positions 9 to 21 are enriched in polar residues; that stretch reads HDSSGSLNENSDG. The segment covering 32-41 has biased composition (basic and acidic residues); it reads LKKEKPKWKS. Residues 152 to 227 enclose the Ubiquitin-like domain; it reads SQLRLRLSTG…VQVIVSQPVQ (76 aa).

The protein localises to the cytoplasm. The chain is Ubiquitin domain-containing protein 2 (Ubtd2) from Mus musculus (Mouse).